A 476-amino-acid chain; its full sequence is Chromosomal replication initiator protein DnaA (476 aa).

The segment at M1–E73 is domain I, interacts with DnaA modulators. A domain II region spans residues E73–S132. A disordered region spans residues K92–R115. The span at E99–S112 shows a compositional bias: basic and acidic residues. The segment at P133–S355 is domain III, AAA+ region. G180, G182, K183, and T184 together coordinate ATP. The interval K356–D476 is domain IV, binds dsDNA.

Belongs to the DnaA family. As to quaternary structure, oligomerizes as a right-handed, spiral filament on DNA at oriC.

The protein resides in the cytoplasm. Plays an essential role in the initiation and regulation of chromosomal replication. ATP-DnaA binds to the origin of replication (oriC) to initiate formation of the DNA replication initiation complex once per cell cycle. Binds the DnaA box (a 9 base pair repeat at the origin) and separates the double-stranded (ds)DNA. Forms a right-handed helical filament on oriC DNA; dsDNA binds to the exterior of the filament while single-stranded (ss)DNA is stabiized in the filament's interior. The ATP-DnaA-oriC complex binds and stabilizes one strand of the AT-rich DNA unwinding element (DUE), permitting loading of DNA polymerase. After initiation quickly degrades to an ADP-DnaA complex that is not apt for DNA replication. Binds acidic phospholipids. The protein is Chromosomal replication initiator protein DnaA of Bradyrhizobium sp. (strain ORS 278).